We begin with the raw amino-acid sequence, 393 residues long: Protein TsgA (393 aa).

12 helical membrane passes run Trp-11–Met-31, Phe-51–Pro-71, Phe-78–Leu-98, Ala-101–Ile-121, Leu-134–Phe-154, Trp-162–Gly-182, Ile-206–Ile-226, Thr-245–Leu-265, Ile-273–Pro-293, Ala-297–Leu-317, Phe-332–Val-352, and Leu-361–Val-381.

Belongs to the major facilitator superfamily. TsgA family.

It localises to the cell inner membrane. This chain is Protein TsgA, found in Escherichia coli O7:K1 (strain IAI39 / ExPEC).